The following is a 135-amino-acid chain: ATP synthase epsilon chain (135 aa).

This sequence belongs to the ATPase epsilon chain family. As to quaternary structure, F-type ATPases have 2 components, CF(1) - the catalytic core - and CF(0) - the membrane proton channel. CF(1) has five subunits: alpha(3), beta(3), gamma(1), delta(1), epsilon(1). CF(0) has three main subunits: a, b and c.

Its subcellular location is the cell inner membrane. Produces ATP from ADP in the presence of a proton gradient across the membrane. The chain is ATP synthase epsilon chain from Brucella anthropi (strain ATCC 49188 / DSM 6882 / CCUG 24695 / JCM 21032 / LMG 3331 / NBRC 15819 / NCTC 12168 / Alc 37) (Ochrobactrum anthropi).